The primary structure comprises 396 residues: MLNNILQFLKERELYSQANFETELDNHLKEKKNNFYVGFDPTANSLHIGNYVLIHIAKLLKDMGHTPHIVLGSATALIGDPTGRIELRKILEEKEIVKNTKTIKKQIKQFLGDVIIHENKVWLEKLNYIEVIRELGAFFSVNKMLSTDAFSARWEKGLTLMELNYMILQAYDFYYLHKNHNVTLQIGGSDQWANILAGANLIKRKNNASVFGLTANLLVKANGEKMGKTSSGALWLDENKTSVFDFYQYWINLDDQSLKKTFLMLTMLDKKVIDELCNLKGPKIKQTKQMLAFLITELIHGTKKAKEAQQRSELIFSNQPDLDIKLVKTSTNLIDYLVETKFIKSKSEARRLISQKGLTINNKHVLDLNQIIEWKEELQIIRKGKKSFLTIKTVNS.

Tyrosine 36 lines the L-tyrosine pocket. The 'HIGH' region motif lies at 41-50 (PTANSLHIGN). Positions 165 and 169 each coordinate L-tyrosine. The 'KMSKS' region signature appears at 225–229 (KMGKT). Lysine 228 serves as a coordination point for ATP. One can recognise an S4 RNA-binding domain in the interval 331 to 394 (TNLIDYLVET…KKSFLTIKTV (64 aa)).

Belongs to the class-I aminoacyl-tRNA synthetase family. TyrS type 1 subfamily. In terms of assembly, homodimer.

It localises to the cytoplasm. The catalysed reaction is tRNA(Tyr) + L-tyrosine + ATP = L-tyrosyl-tRNA(Tyr) + AMP + diphosphate + H(+). Its function is as follows. Catalyzes the attachment of tyrosine to tRNA(Tyr) in a two-step reaction: tyrosine is first activated by ATP to form Tyr-AMP and then transferred to the acceptor end of tRNA(Tyr). The sequence is that of Tyrosine--tRNA ligase from Mycoplasma genitalium (strain ATCC 33530 / DSM 19775 / NCTC 10195 / G37) (Mycoplasmoides genitalium).